The following is a 374-amino-acid chain: MILKEGEVVFEVPDKLTVTKKDEVFYNPRMKTCRDISIAVIQAFLNLYHKRDKFYIADALAGSGIRGLRYAKELEFNGELKVFLNDINPKAYEKIINNAKLNEIENIDVFNEDANTFLSKHFRFFNVVDIDPFGSPAPYVEQAIRALVTRNGLLCLTATDTAALCGRSKKSCLRKYLAYPLFGRDCHEFALRVLVGYVMRMATKYELALKPVFCHATDHYVRVYLVTDRGAKRADKVFEMLGYVKDVNGIKIIKKFEEGYEKGFAGPLYIGNLYDKALVEEALKIAEKREFSERVLKILNAIKGESAINQVGCYDTHQIGKMLKISVPPMQDIINKLKEMGFNAVVTHYNPKGIKTDATLKNVIEAIYQCTKIR.

In terms of domain architecture, Trm1 methyltransferase spans 1–367 (MILKEGEVVF…ATLKNVIEAI (367 aa)). Positions 34, 66, 86, 113, and 114 each coordinate S-adenosyl-L-methionine.

It belongs to the class I-like SAM-binding methyltransferase superfamily. Trm1 family.

It carries out the reaction guanosine(26) in tRNA + 2 S-adenosyl-L-methionine = N(2)-dimethylguanosine(26) in tRNA + 2 S-adenosyl-L-homocysteine + 2 H(+). Dimethylates a single guanine residue at position 26 of a number of tRNAs using S-adenosyl-L-methionine as donor of the methyl groups. The chain is tRNA (guanine(26)-N(2))-dimethyltransferase from Methanocaldococcus jannaschii (strain ATCC 43067 / DSM 2661 / JAL-1 / JCM 10045 / NBRC 100440) (Methanococcus jannaschii).